The following is a 131-amino-acid chain: PDZ domain-containing protein C52A11.3 (131 aa).

One can recognise a PDZ domain in the interval 51–127 (LVKLQKDANR…RLYLQIARPH (77 aa)).

The chain is PDZ domain-containing protein C52A11.3 from Caenorhabditis elegans.